The chain runs to 186 residues: ADP-ribosylation factor-like protein 6 (186 aa).

G2 carries the N-myristoyl glycine lipid modification. GTP-binding positions include 24 to 31 (GLDNSGKT), T50, 69 to 73 (DMSGQ), G72, 130 to 133 (NKMD), and A164. Position 50 (T50) interacts with Mg(2+).

Belongs to the small GTPase superfamily. Arf family. Expressed in brain, heart and eye. Isoform 2 is expressed only in the retina.

Its subcellular location is the cell projection. It localises to the cilium membrane. It is found in the cytoplasm. The protein localises to the cytoskeleton. The protein resides in the cilium axoneme. Its subcellular location is the cilium basal body. In terms of biological role, probably involved in membrane protein trafficking at the base of the ciliary organelle. May function in cilia biogenesis. Isoform 2 is required for proper retinal function and organization. This is ADP-ribosylation factor-like protein 6 (arl6) from Danio rerio (Zebrafish).